Reading from the N-terminus, the 902-residue chain is HTH-type transcriptional regulator MalT (902 aa).

Residue 39-46 coordinates ATP; sequence SPAGYGKT. In terms of domain architecture, HTH luxR-type spans 830–895; the sequence is ELIRTSPLTQ…DAVQHAQQLL (66 aa). The segment at residues 854–873 is a DNA-binding region (H-T-H motif); the sequence is NEQIAGELAVAATTIKTHIR.

This sequence belongs to the MalT family. In terms of assembly, monomer in solution. Oligomerizes to an active state in the presence of the positive effectors ATP and maltotriose.

Activated by ATP and maltotriose, which are both required for DNA binding. Its function is as follows. Positively regulates the transcription of the maltose regulon whose gene products are responsible for uptake and catabolism of malto-oligosaccharides. Specifically binds to the promoter region of its target genes, recognizing a short DNA motif called the MalT box. The polypeptide is HTH-type transcriptional regulator MalT (Salmonella dublin (strain CT_02021853)).